The sequence spans 156 residues: Myosin regulatory light chain, striated adductor muscle (156 aa).

Position 1 is a blocked amino end (Ala) (A1). 2 consecutive EF-hand domains span residues 15–50 and 84–119; these read KQIQ…LGRT and DSEE…MGDN. Residues D28, D30, D32, and D39 each coordinate Ca(2+).

In molluscan muscle, calcium regulation is associated with myosin rather than with actin. Muscle myosin contains two types of light chains: the catalytic light chain, essential for ATPase activity, and the regulatory light chain, a calcium-binding protein responsible for Ca(2+) dependent binding and Ca(2+) dependent Mg-ATPase activity. In Chlamys nipponensis akazara (Akazara scallop), this protein is Myosin regulatory light chain, striated adductor muscle.